Reading from the N-terminus, the 1324-residue chain is Sal-like protein 1 (1324 aa).

The segment at 1–42 (MSRRKQAKPQHFQSDPEVASLPRRDGDTEKGQPSRPTKSKDA) is disordered. Over residues 22–42 (PRRDGDTEKGQPSRPTKSKDA) the composition is skewed to basic and acidic residues. The segment at 43–65 (HVCGRCCAEFFELSDLLLHKKNC) adopts a C2H2-type 1; atypical zinc-finger fold. Disordered stretches follow at residues 77–102 (NPASPPETFSPSPPPDNPDEQMNDTV), 108–127 (VDCSDLSEHNGLDREESMEV), 132–172 (ANKS…TSAI), and 317–336 (PPIQLPQSSSGNTIIPSNSG). Positions 113 to 124 (LSEHNGLDREES) are enriched in basic and acidic residues. The span at 135-158 (SGSGTSSGSHSSTAPSSSSSSSSS) shows a compositional bias: low complexity. Residues 321-336 (LPQSSSGNTIIPSNSG) are compositionally biased toward polar residues. Residue lysine 439 forms a Glycyl lysine isopeptide (Lys-Gly) (interchain with G-Cter in SUMO2) linkage. 2 consecutive C2H2-type zinc fingers follow at residues 449–471 (HKCRFCAKVFGSDSALQIHLRSH) and 477–499 (FKCNICGNRFSTKGNLKVHFQRH). The disordered stretch occupies residues 577–646 (PIPISHSATS…ASSSVLSSPA (70 aa)). Serine 590, serine 593, and serine 595 each carry phosphoserine. Over residues 633 to 646 (SVPTASSSVLSSPA) the composition is skewed to low complexity. Residues lysine 673, lysine 690, and lysine 701 each participate in a glycyl lysine isopeptide (Lys-Gly) (interchain with G-Cter in SUMO2) cross-link. C2H2-type zinc fingers lie at residues 706–728 (NECIICHRVLSCQSALKMHYRTH), 734–756 (FKCKICGRAFTTKGNLKTHYSVH), and 766–788 (HSCPICQKKFTNAVVLQQHIRMH). 2 disordered regions span residues 790 to 856 (GGQI…SSPL) and 894 to 963 (EGDV…LSPT). The segment covering 802-811 (YSESMESDTG) has biased composition (polar residues). Positions 820–833 (DLDNFSDENMEDCP) are enriched in acidic residues. Residues 843–856 (SADASQDSLSSSPL) are compositionally biased toward low complexity. The span at 899–936 (TNDSSSVGGDMESQSAGSPAISESTSSMQALSPSNSTQ) shows a compositional bias: polar residues. Residues 937-949 (EFHKSPSIEEKPQ) are compositionally biased toward basic and acidic residues. A phosphoserine mark is found at serine 941 and serine 943. Glycyl lysine isopeptide (Lys-Gly) (interchain with G-Cter in SUMO2) cross-links involve residues lysine 947 and lysine 982. C2H2-type zinc fingers lie at residues 1001-1023 (TACDICGKTFACQSALDIHYRSH) and 1029-1051 (FICTVCNRGFSTKGNLKQHMLTH). Lysine 1086 participates in a covalent cross-link: Glycyl lysine isopeptide (Lys-Gly) (interchain with G-Cter in SUMO2). Residues 1095–1120 (VSPQDSKDTPTSHVPSGPLSSSATSP) are disordered. Polar residues predominate over residues 1105-1119 (TSHVPSGPLSSSATS). 2 C2H2-type zinc fingers span residues 1134-1156 (HYCNTCGKTFSSSSALQIHERTH) and 1162-1184 (FACTICGRAFTTKGNLKVHMGTH). Glycyl lysine isopeptide (Lys-Gly) (interchain with G-Cter in SUMO2) cross-links involve residues lysine 1219, lysine 1299, and lysine 1319.

The protein belongs to the sal C2H2-type zinc-finger protein family. In terms of assembly, may associate with NuRD histone deacetylase complex (HDAC). Interacts with components of HDAC complex including HDAC1, HDAC2, RBBP4, RBPP7, MTA1 and MTA2. Interacts with CCNQ. Interacts with NSD2 (via PHD-type zinc fingers 1, 2 and 3). As to expression, highest levels in kidney. Lower levels in adult brain (enriched in corpus callosum, lower expression in substantia nigra) and liver.

It localises to the nucleus. Functionally, transcriptional repressor involved in organogenesis. Plays an essential role in ureteric bud invasion during kidney development. The sequence is that of Sal-like protein 1 (SALL1) from Homo sapiens (Human).